The primary structure comprises 473 residues: Thermostable beta-glucosidase B (473 aa).

The active-site Proton donor is E196. E378 acts as the Nucleophile in catalysis.

Belongs to the glycosyl hydrolase 1 family.

Its subcellular location is the cytoplasm. The catalysed reaction is Hydrolysis of terminal, non-reducing beta-D-glucosyl residues with release of beta-D-glucose.. This is Thermostable beta-glucosidase B (bglB) from Thermobispora bispora (Microbispora bispora).